The sequence spans 198 residues: Dual specificity protein phosphatase 13B (198 aa).

A Tyrosine-protein phosphatase domain is found at 45-193 (HIDEVWPSLF…LQVLDNRLGR (149 aa)). Cys-138 serves as the catalytic Phosphocysteine intermediate.

It belongs to the protein-tyrosine phosphatase family. Non-receptor class dual specificity subfamily. As to expression, highly expressed in the testis (at protein level). Also found in the skeletal muscle.

The enzyme catalyses O-phospho-L-tyrosyl-[protein] + H2O = L-tyrosyl-[protein] + phosphate. It carries out the reaction O-phospho-L-seryl-[protein] + H2O = L-seryl-[protein] + phosphate. The catalysed reaction is O-phospho-L-threonyl-[protein] + H2O = L-threonyl-[protein] + phosphate. Functionally, dual specificity phosphatase that dephosphorylates MAPK8/JNK and MAPK14/p38, but not MAPK1/ERK2, in vitro. Exhibits intrinsic phosphatase activity towards both phospho-seryl/threonyl and -tyrosyl residues, with similar specific activities in vitro. This chain is Dual specificity protein phosphatase 13B, found in Homo sapiens (Human).